A 333-amino-acid chain; its full sequence is Homeobox protein Hox-A1 (333 aa).

A disordered region spans residues 61–82 (ITSPHHHHHHHHHPQPATYQTS). The span at 64–74 (PHHHHHHHHHP) shows a compositional bias: basic residues. The segment at 74–202 (PQPATYQTSG…PASETSSPAQ (129 aa)) is interaction with OGT. Threonine 152 carries O-linked (GlcNAc) threonine glycosylation. The Antp-type hexapeptide motif lies at 203–208 (TFDWMK). The homeobox DNA-binding region spans 227-286 (QPNAVRTNFTTKQLTELEKEFHFNKYLTRARSEIAASLQLNETQVKIWFQNRRMKQKKRE). The disordered stretch occupies residues 279–333 (RMKQKKREKEGLLPMSPATPPGSDEKTEESSEKSSSSPSAPSPASSTSDTLTTSH). Residues 301–310 (SDEKTEESSE) show a composition bias toward basic and acidic residues. Residues 311-333 (KSSSSPSAPSPASSTSDTLTTSH) are compositionally biased toward low complexity.

The protein belongs to the Antp homeobox family. Labial subfamily. Interacts with OGT (via TPR repeats domain); the interaction takes place mainly in the nucleus. Forms a DNA-binding heterodimer with transcription factor PBX1. Glycosylated by OGT.

It localises to the nucleus. Sequence-specific transcription factor. Regulates multiple developmental processes including brainstem, inner and outer ear, abducens nerve and cardiovascular development and morphogenesis as well as cognition and behavior. Also part of a developmental regulatory system that provides cells with specific positional identities on the anterior-posterior axis. Acts on the anterior body structures. Seems to act in the maintenance and/or generation of hindbrain segments. Activates transcription in the presence of PBX1A and PKNOX1. This is Homeobox protein Hox-A1 (Hoxa1) from Rattus norvegicus (Rat).